We begin with the raw amino-acid sequence, 380 residues long: Cytochrome b (380 aa).

4 helical membrane-spanning segments follow: residues 33 to 53 (SGSL…FLAM), 77 to 98 (WLIR…YLHV), 113 to 133 (WNIG…GYVL), and 178 to 198 (FFAF…IHLL). Heme b-binding residues include His83 and His97. 2 residues coordinate heme b: His182 and His196. His201 contacts a ubiquinone. Transmembrane regions (helical) follow at residues 226–246 (YKDL…ALFS), 288–308 (LGGV…PILH), 320–340 (LSQI…WIGG), and 347–367 (FVLI…IALP).

This sequence belongs to the cytochrome b family. In terms of assembly, the cytochrome bc1 complex contains 3 respiratory subunits (MT-CYB, CYC1 and UQCRFS1), 2 core proteins (UQCRC1 and UQCRC2) and probably 6 low-molecular weight proteins. Requires heme b as cofactor.

The protein resides in the mitochondrion inner membrane. Component of the ubiquinol-cytochrome c reductase complex (complex III or cytochrome b-c1 complex) that is part of the mitochondrial respiratory chain. The b-c1 complex mediates electron transfer from ubiquinol to cytochrome c. Contributes to the generation of a proton gradient across the mitochondrial membrane that is then used for ATP synthesis. The chain is Cytochrome b (mt-cyb) from Polyodon spathula (North American paddlefish).